The sequence spans 183 residues: A-type ATP synthase subunit E (183 aa).

Belongs to the V-ATPase E subunit family. In terms of assembly, has multiple subunits with at least A(3), B(3), C, D, E, F, H, I and proteolipid K(x).

Its subcellular location is the cell membrane. Functionally, component of the A-type ATP synthase that produces ATP from ADP in the presence of a proton gradient across the membrane. The sequence is that of A-type ATP synthase subunit E from Methanococcoides burtonii (strain DSM 6242 / NBRC 107633 / OCM 468 / ACE-M).